The sequence spans 815 residues: Ataxin-1 (815 aa).

The span at 1 to 41 (MKSNQERSNECLPPKKREIPATSRSSEEKAPTLPSDNHRVE) shows a compositional bias: basic and acidic residues. The disordered stretch occupies residues 1–63 (MKSNQERSNE…GHGGGRHGPA (63 aa)). A Glycyl lysine isopeptide (Lys-Gly) (interchain with G-Cter in SUMO) cross-link involves residue Lys-16. The segment covering 49–61 (NPGGRGHGGGRHG) has biased composition (gly residues). Ser-82 and Ser-88 each carry phosphoserine. Disordered stretches follow at residues 185-270 (GSLS…PVHL), 329-355 (EKSR…VPHP), and 397-424 (VQQA…PGHR). Residue Lys-194 forms a Glycyl lysine isopeptide (Lys-Gly) (interchain with G-Cter in SUMO) linkage. The span at 197 to 226 (QQQQQQQQQQQQHQHQQQQQQQQQQQQQQH) shows a compositional bias: low complexity. Residues Ser-238 and Ser-253 each carry the phosphoserine modification. The span at 243 to 260 (QQNQYVHISSSPQNTGRT) shows a compositional bias: polar residues. The self-association stretch occupies residues 494–604 (VGSTDMEASG…TEDFIQSAEI (111 aa)). The interaction with USP7 stretch occupies residues 538–815 (LVTQAAYPAM…CIEGRSNVGK (278 aa)). The segment at 540-766 (TQAAYPAMVQ…FLTKIEPSKP (227 aa)) is RNA-binding. The 132-residue stretch at 562 to 693 (SPAAAPPTLP…SLTLKNLKNG (132 aa)) folds into the AXH domain. Residues Lys-609, Lys-696, and Lys-745 each participate in a glycyl lysine isopeptide (Lys-Gly) (interchain with G-Cter in SUMO) cross-link. Positions 762–798 (EPSKPAATRKRRWSAPESRKLEKSEDEPPLTLPKPSL) are disordered. Ser-775 carries the post-translational modification Phosphoserine. Positions 794-797 (PKPS) match the Nuclear localization signal motif.

This sequence belongs to the ATXN1 family. In terms of assembly, homooligomer. Interacts with CIC. Interacts with ANP32A, PQBP1, UBQLN4, ATXN1L and USP7. Directly interacts with RBPJ; this interaction is disrupted in the presence of Notch intracellular domain. Competes with ATXN1L for RBPJ-binding. Found in a complex with CIC and ATXN1L. Post-translationally, ubiquitinated by UBE3A, leading to its degradation by the proteasome. The presence of expanded poly-Gln repeats in spinocerebellar ataxia 1 (SCA1) patients impairs ubiquitination and degradation, leading to accumulation of ATXN1 in neurons and subsequent toxicity. In terms of processing, phosphorylation at Ser-775 increases the pathogenicity of proteins with an expanded polyglutamine tract. Sumoylation is dependent on nuclear localization and phosphorylation at Ser-775. It is reduced in the presence of an expanded polyglutamine tract. Widely expressed throughout the body.

It localises to the cytoplasm. The protein resides in the nucleus. Functionally, chromatin-binding factor that repress Notch signaling in the absence of Notch intracellular domain by acting as a CBF1 corepressor. Binds to the HEY promoter and might assist, along with NCOR2, RBPJ-mediated repression. Binds RNA in vitro. May be involved in RNA metabolism. In concert with CIC and ATXN1L, involved in brain development. The sequence is that of Ataxin-1 (ATXN1) from Homo sapiens (Human).